The chain runs to 361 residues: Peptide chain release factor 1 (361 aa).

Glutamine 235 carries the N5-methylglutamine modification.

This sequence belongs to the prokaryotic/mitochondrial release factor family. In terms of processing, methylated by PrmC. Methylation increases the termination efficiency of RF1.

It localises to the cytoplasm. Functionally, peptide chain release factor 1 directs the termination of translation in response to the peptide chain termination codons UAG and UAA. This is Peptide chain release factor 1 from Xanthomonas campestris pv. campestris (strain B100).